Reading from the N-terminus, the 319-residue chain is Acetyl-coenzyme A carboxylase carboxyl transferase subunit alpha (319 aa).

The region spanning 35–296 is the CoA carboxyltransferase C-terminal domain; sequence DLDKEIEQLE…KATLVANLAE (262 aa).

The protein belongs to the AccA family. As to quaternary structure, acetyl-CoA carboxylase is a heterohexamer composed of biotin carboxyl carrier protein (AccB), biotin carboxylase (AccC) and two subunits each of ACCase subunit alpha (AccA) and ACCase subunit beta (AccD).

The protein resides in the cytoplasm. It catalyses the reaction N(6)-carboxybiotinyl-L-lysyl-[protein] + acetyl-CoA = N(6)-biotinyl-L-lysyl-[protein] + malonyl-CoA. Its pathway is lipid metabolism; malonyl-CoA biosynthesis; malonyl-CoA from acetyl-CoA: step 1/1. Functionally, component of the acetyl coenzyme A carboxylase (ACC) complex. First, biotin carboxylase catalyzes the carboxylation of biotin on its carrier protein (BCCP) and then the CO(2) group is transferred by the carboxyltransferase to acetyl-CoA to form malonyl-CoA. The protein is Acetyl-coenzyme A carboxylase carboxyl transferase subunit alpha of Photobacterium profundum (strain SS9).